Here is a 445-residue protein sequence, read N- to C-terminus: MSGIPHDHYEPRTGIEKWLHSRLPIVALAYDTIMIPTPRNLNWMWIWGVVLAFCLVLQIVTGIVLAMHYTPHVDLAFASVEHIMRNVNGGFMLRYLHANGASLFFIAVYLHIFRGLYYGSYKAPREVTWIVGMLIYLAMMATAFMGYVLPWGQMSFWGATVITGLFGAIPGIGHSIQTWLLGGPAVDNATLNRFFSLHYLLPFVIAALVAIHIWAFHSTGNNNPTGVEVRRTSKAEAQKDTVPFWPYFIIKDVFALAVVLLVFFAIVGFMPNYLGHPDNYIEANPLSTPAHIVPEWYFLPFYAILRAFTADVWVVQIANFISFGIIDAKFFGVLAMFGAILVMALVPWLDTSPVRSGRYRPMFKIYFWLLAADFVILTWVGAQQTTFPYDWISLIASAYWFAYFLVILPILGAIEKPVAPPATIEEDFNAHYSPATGGTKTVVAE.

Residues 2-49 (SGIPHDHYEPRTGIEKWLHSRLPIVALAYDTIMIPTPRNLNWMWIWGV) lie on the Cytoplasmic side of the membrane. A helical membrane pass occupies residues 50-67 (VLAFCLVLQIVTGIVLAM). Topologically, residues 68 to 94 (HYTPHVDLAFASVEHIMRNVNGGFMLR) are periplasmic. The helical transmembrane segment at 95–113 (YLHANGASLFFIAVYLHIF) threads the bilayer. Heme b contacts are provided by His97 and His111. At 114–129 (RGLYYGSYKAPREVTW) the chain is on the cytoplasmic side. A helical membrane pass occupies residues 130 to 149 (IVGMLIYLAMMATAFMGYVL). Topologically, residues 150 to 193 (PWGQMSFWGATVITGLFGAIPGIGHSIQTWLLGGPAVDNATLNR) are periplasmic. A helical membrane pass occupies residues 194–216 (FFSLHYLLPFVIAALVAIHIWAF). Positions 198 and 212 each coordinate heme b. Topologically, residues 217 to 252 (HSTGNNNPTGVEVRRTSKAEAQKDTVPFWPYFIIKD) are cytoplasmic. The helical transmembrane segment at 253-270 (VFALAVVLLVFFAIVGFM) threads the bilayer. At 271–329 (PNYLGHPDNYIEANPLSTPAHIVPEWYFLPFYAILRAFTADVWVVQIANFISFGIIDAK) the chain is on the periplasmic side. Residues 330–346 (FFGVLAMFGAILVMALV) traverse the membrane as a helical segment. The Cytoplasmic portion of the chain corresponds to 347–364 (PWLDTSPVRSGRYRPMFK). A helical transmembrane segment spans residues 365-382 (IYFWLLAADFVILTWVGA). Residues 383–388 (QQTTFP) are Periplasmic-facing. The chain crosses the membrane as a helical span at residues 389–408 (YDWISLIASAYWFAYFLVIL). At 409 to 445 (PILGAIEKPVAPPATIEEDFNAHYSPATGGTKTVVAE) the chain is on the cytoplasmic side.

The protein belongs to the cytochrome b family. The main subunits of complex b-c1 are: cytochrome b, cytochrome c1 and the Rieske protein. The cofactor is heme b.

The protein localises to the cell membrane. In terms of biological role, component of the ubiquinol-cytochrome c reductase complex (complex III or cytochrome b-c1 complex), which is a respiratory chain that generates an electrochemical potential coupled to ATP synthesis. This Cereibacter sphaeroides (Rhodobacter sphaeroides) protein is Cytochrome b (petB).